A 235-amino-acid polypeptide reads, in one-letter code: RAD9, HUS1, RAD1-interacting nuclear orphan protein 1 (235 aa).

S50 bears the Phosphoserine mark. An RAD1-binding motif motif is present at residues 54–60; sequence SWVSPQF. 3 disordered regions span residues 75-106, 111-130, and 149-198; these read HRDQ…SETL, RVQP…VPLF, and VFAP…LVKD. The span at 96 to 106 shows a compositional bias: polar residues; it reads ESPQSSSSETL. The D-box signature appears at 123-130; sequence RRPLVPLF. Residues 161 to 173 are compositionally biased toward basic and acidic residues; sequence SVRDDPISPDQKE. A KEN box motif is present at residues 171–175; it reads QKENS.

Interacts (when phosphorylated by PLK1) with POLQ; promoting POLQ recruitment to DNA damage sites. Interacts with RAD1; interaction is direct and promotes association with the 9-1-1 (RAD9-RAD1-HUS1) complex. Interacts with RAD18. Interacts with TOPBP1. Interacts with UBE2N. Post-translationally, phosphorylated at Ser-50 by PLK1, promoting interaction with polymerase theta (POLQ). In terms of processing, ubiquitinated and degraded by the APC/C complex upon mitotic exit.

It is found in the nucleus. Its subcellular location is the chromosome. In terms of biological role, involved in microhomology-mediated end-joining (MMEJ) DNA repair by promoting recruitment of polymerase theta (POLQ) to DNA damage sites during mitosis. MMEJ is an alternative non-homologous end-joining (NHEJ) machinery that takes place during mitosis to repair double-strand breaks in DNA that originate in S-phase. Accumulates in M-phase; following phosphorylation by PLK1, interacts with POLQ, enabling its recruitment to double-strand breaks for subsequent repair. Also involved in the DNA damage response (DDR) signaling in response to genotoxic stresses such as ionizing radiation (IR) during the S phase. Recruited to sites of DNA damage through interaction with the 9-1-1 cell-cycle checkpoint response complex and TOPBP1 in a ATR-dependent manner. Required for the progression of the G1 to S phase transition. Plays a role in the stimulation of CHEK1 phosphorylation. In Mus musculus (Mouse), this protein is RAD9, HUS1, RAD1-interacting nuclear orphan protein 1 (Rhno1).